The following is a 38-amino-acid chain: Large ribosomal subunit protein bL36 (38 aa).

Belongs to the bacterial ribosomal protein bL36 family.

The chain is Large ribosomal subunit protein bL36 from Chlorobaculum parvum (strain DSM 263 / NCIMB 8327) (Chlorobium vibrioforme subsp. thiosulfatophilum).